A 365-amino-acid chain; its full sequence is Chorismate synthase (365 aa).

An NADP(+)-binding site is contributed by Arg47. FMN-binding positions include 124-126 (RAS), Gly287, 302-306 (KPTAT), and Arg328. The disordered stretch occupies residues 266-290 (FIKSDDSSKLRTTSNNSGGIQGGIS).

This sequence belongs to the chorismate synthase family. Homotetramer. FMNH2 serves as cofactor.

It carries out the reaction 5-O-(1-carboxyvinyl)-3-phosphoshikimate = chorismate + phosphate. The protein operates within metabolic intermediate biosynthesis; chorismate biosynthesis; chorismate from D-erythrose 4-phosphate and phosphoenolpyruvate: step 7/7. Functionally, catalyzes the anti-1,4-elimination of the C-3 phosphate and the C-6 proR hydrogen from 5-enolpyruvylshikimate-3-phosphate (EPSP) to yield chorismate, which is the branch point compound that serves as the starting substrate for the three terminal pathways of aromatic amino acid biosynthesis. This reaction introduces a second double bond into the aromatic ring system. This chain is Chorismate synthase, found in Prochlorococcus marinus (strain MIT 9301).